Here is a 444-residue protein sequence, read N- to C-terminus: Protein-serine O-palmitoleoyltransferase porcupine (444 aa).

A run of 10 helical transmembrane segments spans residues asparagine 29–tryptophan 49, valine 81–glycine 101, phenylalanine 128–valine 150, threonine 163–phenylalanine 183, leucine 201–serine 221, tyrosine 249–alanine 269, phenylalanine 304–alanine 324, aspartate 326–phenylalanine 346, valine 383–methionine 403, and tryptophan 420–leucine 440. The active site involves histidine 323.

Belongs to the membrane-bound acyltransferase family. Porcupine subfamily.

It localises to the membrane. The enzyme catalyses [Wnt protein]-L-serine + (9Z)-hexadecenoyl-CoA = [Wnt protein]-O-(9Z)-hexadecenoyl-L-serine + CoA. Functionally, key regulator of the Wnt signaling pathway that mediates lipid modification of Wnt proteins. Acts as a protein-serine O-palmitoleoyltransferase that catalyzes the attachment of palmitoleate, a 16-carbon monounsaturated fatty acid (C16:1(9Z)), to Wnt proteins. Serine palmitoleoylation of WNT proteins is required for efficient binding to frizzled receptors. Has a role in cell specification, specifically in blastomere signaling. Involved in cytosketetal polarity. Required for the orientation of mitotic spindle axis. In Caenorhabditis briggsae, this protein is Protein-serine O-palmitoleoyltransferase porcupine.